Consider the following 66-residue polypeptide: MNAQELRNKTPDQLREDLVTLKKEAFNLRFQQATGQLENNARIRTVRRDVARVMTVLNEKAAEAAN.

The protein belongs to the universal ribosomal protein uL29 family.

This is Large ribosomal subunit protein uL29 from Ruegeria pomeroyi (strain ATCC 700808 / DSM 15171 / DSS-3) (Silicibacter pomeroyi).